A 152-amino-acid chain; its full sequence is Urease accessory protein UreE (152 aa).

It belongs to the UreE family.

It localises to the cytoplasm. In terms of biological role, involved in urease metallocenter assembly. Binds nickel. Probably functions as a nickel donor during metallocenter assembly. This Psychromonas ingrahamii (strain DSM 17664 / CCUG 51855 / 37) protein is Urease accessory protein UreE.